Reading from the N-terminus, the 65-residue chain is Protein translocase subunit SecE (65 aa).

The helical transmembrane segment at 44–64 threads the bilayer; it reads LVMAVVGLIAYIVQLTTSLII.

This sequence belongs to the SecE/SEC61-gamma family. In terms of assembly, component of the Sec protein translocase complex. Heterotrimer consisting of SecY (alpha), SecG (beta) and SecE (gamma) subunits. The heterotrimers can form oligomers, although 1 heterotrimer is thought to be able to translocate proteins. Interacts with the ribosome. May interact with SecDF, and other proteins may be involved.

Its subcellular location is the cell membrane. Its function is as follows. Essential subunit of the Sec protein translocation channel SecYEG. Clamps together the 2 halves of SecY. May contact the channel plug during translocation. The sequence is that of Protein translocase subunit SecE from Sulfolobus acidocaldarius (strain ATCC 33909 / DSM 639 / JCM 8929 / NBRC 15157 / NCIMB 11770).